Reading from the N-terminus, the 254-residue chain is Phosphoribosylaminoimidazole-succinocarboxamide synthase (254 aa).

This sequence belongs to the SAICAR synthetase family.

The catalysed reaction is 5-amino-1-(5-phospho-D-ribosyl)imidazole-4-carboxylate + L-aspartate + ATP = (2S)-2-[5-amino-1-(5-phospho-beta-D-ribosyl)imidazole-4-carboxamido]succinate + ADP + phosphate + 2 H(+). It participates in purine metabolism; IMP biosynthesis via de novo pathway; 5-amino-1-(5-phospho-D-ribosyl)imidazole-4-carboxamide from 5-amino-1-(5-phospho-D-ribosyl)imidazole-4-carboxylate: step 1/2. In Brucella melitensis biotype 2 (strain ATCC 23457), this protein is Phosphoribosylaminoimidazole-succinocarboxamide synthase.